The primary structure comprises 144 residues: Large ribosomal subunit protein uL15 (144 aa).

A disordered region spans residues 1–54; that stretch reads MRLNTIKPGEGSKKTAKRVGRGIGSGLGKTCGRGHKGQKSRSGGFHKVGFEGGQ. The segment covering 21–31 has biased composition (gly residues); that stretch reads RGIGSGLGKTC.

This sequence belongs to the universal ribosomal protein uL15 family. As to quaternary structure, part of the 50S ribosomal subunit.

In terms of biological role, binds to the 23S rRNA. In Dechloromonas aromatica (strain RCB), this protein is Large ribosomal subunit protein uL15.